The following is a 101-amino-acid chain: MGTRFLLALFLVLLVLGFEVQGAHLPQQEESAGPALLTQMQESLSSYWDSAKAAASNLYQKTYLPTVDEKLRDMYSKSTAAMSTYAGILTDQVLSMLKGEE.

A signal peptide spans 1-22 (MGTRFLLALFLVLLVLGFEVQG). Residues 66-74 (TVDEKLRDM) form a lipid binding region. Residues 78-101 (STAAMSTYAGILTDQVLSMLKGEE) are lipoprotein lipase cofactor.

Belongs to the apolipoprotein C2 family. Post-translationally, proapolipoprotein C-II is synthesized as a sialic acid containing glycoprotein which is subsequently desialylated prior to its proteolytic processing. Proapolipoprotein C-II, the major form found in plasma undergoes proteolytic cleavage of its N-terminal hexapeptide to generate apolipoprotein C-II, which occurs as the minor form in plasma.

It localises to the secreted. Its function is as follows. Component of chylomicrons, very low-density lipoproteins (VLDL), low-density lipoproteins (LDL), and high-density lipoproteins (HDL) in plasma. Plays an important role in lipoprotein metabolism as an activator of lipoprotein lipase. Both proapolipoprotein C-II and apolipoprotein C-II can activate lipoprotein lipase. The polypeptide is Apolipoprotein C-II (APOC2) (Plecturocebus moloch (Dusky titi monkey)).